The following is a 386-amino-acid chain: DNA-directed RNA polymerase subunit Rpo1C (386 aa).

The protein belongs to the RNA polymerase beta' chain family. As to quaternary structure, part of the RNA polymerase complex.

It localises to the cytoplasm. The catalysed reaction is RNA(n) + a ribonucleoside 5'-triphosphate = RNA(n+1) + diphosphate. Functionally, DNA-dependent RNA polymerase (RNAP) catalyzes the transcription of DNA into RNA using the four ribonucleoside triphosphates as substrates. Forms part of the jaw domain. The protein is DNA-directed RNA polymerase subunit Rpo1C of Methanococcus maripaludis (strain C6 / ATCC BAA-1332).